We begin with the raw amino-acid sequence, 57 residues long: Large ribosomal subunit protein bL32 (57 aa).

Positions 1 to 21 (MAVQQRRSSKHRRDKRRSHDA) are disordered. Basic residues predominate over residues 7–18 (RSSKHRRDKRRS).

The protein belongs to the bacterial ribosomal protein bL32 family.

This Mycoplasma pneumoniae (strain ATCC 29342 / M129 / Subtype 1) (Mycoplasmoides pneumoniae) protein is Large ribosomal subunit protein bL32 (rpmF).